A 91-amino-acid polypeptide reads, in one-letter code: Defensin-like protein 95 (91 aa).

The first 27 residues, 1 to 27 (MGSLKLSTFAIVVCLSILLISPIEVNG), serve as a signal peptide directing secretion. 4 disulfide bridges follow: Cys31/Cys76, Cys38/Cys63, Cys47/Cys73, and Cys51/Cys75.

This sequence belongs to the DEFL family.

Its subcellular location is the secreted. The chain is Defensin-like protein 95 from Arabidopsis thaliana (Mouse-ear cress).